A 207-amino-acid polypeptide reads, in one-letter code: Holliday junction branch migration complex subunit RuvA (207 aa).

The interval 1–65 (MYDYIRGILT…ETEHVLYGFS (65 aa)) is domain I. Residues 66 to 144 (SRRERECFRM…DLLPLDSKAI (79 aa)) are domain II. Residues 145–155 (ASWESVKPSCM) form a flexible linker region. Residues 155–207 (MDEGIQALAALGYSKPSAERMIAEAMSELPENASLAEILPIALKKNLQGLNKS) form a domain III region.

It belongs to the RuvA family. In terms of assembly, homotetramer. Forms an RuvA(8)-RuvB(12)-Holliday junction (HJ) complex. HJ DNA is sandwiched between 2 RuvA tetramers; dsDNA enters through RuvA and exits via RuvB. An RuvB hexamer assembles on each DNA strand where it exits the tetramer. Each RuvB hexamer is contacted by two RuvA subunits (via domain III) on 2 adjacent RuvB subunits; this complex drives branch migration. In the full resolvosome a probable DNA-RuvA(4)-RuvB(12)-RuvC(2) complex forms which resolves the HJ.

The protein resides in the cytoplasm. Functionally, the RuvA-RuvB-RuvC complex processes Holliday junction (HJ) DNA during genetic recombination and DNA repair, while the RuvA-RuvB complex plays an important role in the rescue of blocked DNA replication forks via replication fork reversal (RFR). RuvA specifically binds to HJ cruciform DNA, conferring on it an open structure. The RuvB hexamer acts as an ATP-dependent pump, pulling dsDNA into and through the RuvAB complex. HJ branch migration allows RuvC to scan DNA until it finds its consensus sequence, where it cleaves and resolves the cruciform DNA. The protein is Holliday junction branch migration complex subunit RuvA of Chlamydia caviae (strain ATCC VR-813 / DSM 19441 / 03DC25 / GPIC) (Chlamydophila caviae).